A 643-amino-acid polypeptide reads, in one-letter code: Threonine--tRNA ligase (643 aa).

In terms of domain architecture, TGS spans 1–61 (MPIITLPDGS…SEDATLEIIT (61 aa)). Positions 243-534 (DHRKIGKALD…ITEEYAGFFP (292 aa)) are catalytic. Cysteine 334, histidine 385, and histidine 511 together coordinate Zn(2+).

This sequence belongs to the class-II aminoacyl-tRNA synthetase family. In terms of assembly, homodimer. Zn(2+) is required as a cofactor.

The protein resides in the cytoplasm. It carries out the reaction tRNA(Thr) + L-threonine + ATP = L-threonyl-tRNA(Thr) + AMP + diphosphate + H(+). Catalyzes the attachment of threonine to tRNA(Thr) in a two-step reaction: L-threonine is first activated by ATP to form Thr-AMP and then transferred to the acceptor end of tRNA(Thr). Also edits incorrectly charged L-seryl-tRNA(Thr). The chain is Threonine--tRNA ligase from Glaesserella parasuis serovar 5 (strain SH0165) (Haemophilus parasuis).